Reading from the N-terminus, the 420-residue chain is ATP-dependent Clp protease ATP-binding subunit ClpX (420 aa).

A ClpX-type ZB domain is found at 4–57 (KTPGNNGKQKLFCSFCGKEQDAVKRLVAGPGVYICDECISLCNEIIAEDHEHSH). Zn(2+) contacts are provided by Cys16, Cys19, Cys38, and Cys41. 122 to 129 (PTGSGKTL) contributes to the ATP binding site.

This sequence belongs to the ClpX chaperone family. As to quaternary structure, component of the ClpX-ClpP complex. Forms a hexameric ring that, in the presence of ATP, binds to fourteen ClpP subunits assembled into a disk-like structure with a central cavity, resembling the structure of eukaryotic proteasomes.

Functionally, ATP-dependent specificity component of the Clp protease. It directs the protease to specific substrates. Can perform chaperone functions in the absence of ClpP. The sequence is that of ATP-dependent Clp protease ATP-binding subunit ClpX from Leptospira interrogans serogroup Icterohaemorrhagiae serovar copenhageni (strain Fiocruz L1-130).